Here is a 67-residue protein sequence, read N- to C-terminus: Surface composition regulator (67 aa).

Belongs to the GlgS family.

In terms of biological role, major determinant of cell surface composition. Negatively regulates motility, adhesion and synthesis of biofilm exopolysaccharides. The polypeptide is Surface composition regulator (Salmonella paratyphi A (strain ATCC 9150 / SARB42)).